The chain runs to 338 residues: Ketol-acid reductoisomerase (NADP(+)) (338 aa).

The KARI N-terminal Rossmann domain occupies 1–181 (MKVYYDKDAD…GGGRTGIIET (181 aa)). Residues 24 to 27 (YGSQ), Arg-47, Ser-50, Ser-52, and 82 to 85 (DEFQ) contribute to the NADP(+) site. His-107 is an active-site residue. Residue Gly-133 coordinates NADP(+). The 146-residue stretch at 182 to 327 (TFKDETETDL…AKLRSMMPWI (146 aa)) folds into the KARI C-terminal knotted domain. Mg(2+)-binding residues include Asp-190, Glu-194, Glu-226, and Glu-230. Ser-251 contributes to the substrate binding site.

This sequence belongs to the ketol-acid reductoisomerase family. It depends on Mg(2+) as a cofactor.

The catalysed reaction is (2R)-2,3-dihydroxy-3-methylbutanoate + NADP(+) = (2S)-2-acetolactate + NADPH + H(+). It catalyses the reaction (2R,3R)-2,3-dihydroxy-3-methylpentanoate + NADP(+) = (S)-2-ethyl-2-hydroxy-3-oxobutanoate + NADPH + H(+). It functions in the pathway amino-acid biosynthesis; L-isoleucine biosynthesis; L-isoleucine from 2-oxobutanoate: step 2/4. It participates in amino-acid biosynthesis; L-valine biosynthesis; L-valine from pyruvate: step 2/4. Its function is as follows. Involved in the biosynthesis of branched-chain amino acids (BCAA). Catalyzes an alkyl-migration followed by a ketol-acid reduction of (S)-2-acetolactate (S2AL) to yield (R)-2,3-dihydroxy-isovalerate. In the isomerase reaction, S2AL is rearranged via a Mg-dependent methyl migration to produce 3-hydroxy-3-methyl-2-ketobutyrate (HMKB). In the reductase reaction, this 2-ketoacid undergoes a metal-dependent reduction by NADPH to yield (R)-2,3-dihydroxy-isovalerate. The polypeptide is Ketol-acid reductoisomerase (NADP(+)) (Thiobacillus denitrificans (strain ATCC 25259 / T1)).